A 177-amino-acid polypeptide reads, in one-letter code: Large ribosomal subunit protein uL6 (177 aa).

It belongs to the universal ribosomal protein uL6 family. In terms of assembly, part of the 50S ribosomal subunit.

Functionally, this protein binds to the 23S rRNA, and is important in its secondary structure. It is located near the subunit interface in the base of the L7/L12 stalk, and near the tRNA binding site of the peptidyltransferase center. This Erwinia tasmaniensis (strain DSM 17950 / CFBP 7177 / CIP 109463 / NCPPB 4357 / Et1/99) protein is Large ribosomal subunit protein uL6.